The primary structure comprises 146 residues: Mitochondrial DnaJ homolog 2 (146 aa).

The region spanning 85 to 146 (EALLILDISA…LERSVLLRKR (62 aa)) is the J domain.

As to quaternary structure, interacts with PAM16/TIM16 and is recruited by the PAM complex.

It localises to the mitochondrion inner membrane. Its function is as follows. Plays a role in mitochondrial biogenesis and protein folding. Participates in the translocation of transit peptide-containing proteins from the inner membrane into the mitochondrial matrix in an ATP-dependent manner, probably by stimulating activity of mtHSP70 (SSC1). This Saccharomyces cerevisiae (strain ATCC 204508 / S288c) (Baker's yeast) protein is Mitochondrial DnaJ homolog 2 (MDJ2).